The primary structure comprises 90 residues: Mitochondrial import inner membrane translocase subunit Tim10 (90 aa).

The Twin CX3C motif signature appears at 37–62; that stretch reads CHSKCINKSYGDSDITKQEALCLDRC. 2 disulfide bridges follow: C37/C62 and C41/C58.

It belongs to the small Tim family. Heterohexamer; composed of 3 copies of TIM9 and 3 copies of TIM10, named soluble 70 kDa complex. Associates directly with the TIM22 complex, whose core is composed of TIM22 and TIM54. Interacts with the transmembrane regions of multi-pass transmembrane proteins in transit.

The protein resides in the mitochondrion inner membrane. Its function is as follows. Mitochondrial intermembrane chaperone that participates in the import and insertion of multi-pass transmembrane proteins into the mitochondrial inner membrane. Also required for the transfer of beta-barrel precursors from the TOM complex to the sorting and assembly machinery (SAM complex) of the outer membrane. Acts as a chaperone-like protein that protects the hydrophobic precursors from aggregation and guide them through the mitochondrial intermembrane space. This Pichia sorbitophila (strain ATCC MYA-4447 / BCRC 22081 / CBS 7064 / NBRC 10061 / NRRL Y-12695) (Hybrid yeast) protein is Mitochondrial import inner membrane translocase subunit Tim10 (TIM10).